The chain runs to 152 residues: Transcription elongation factor Spt5 (152 aa).

The KOW domain occupies 99–128 (PGDVVEVISGPFRGTQAQVIRVEEAKGEVV).

The protein belongs to the archaeal Spt5 family. As to quaternary structure, heterodimer composed of Spt4 and Spt5. Interacts with RNA polymerase (RNAP).

Its function is as follows. Stimulates transcription elongation. This is Transcription elongation factor Spt5 from Saccharolobus solfataricus (strain ATCC 35092 / DSM 1617 / JCM 11322 / P2) (Sulfolobus solfataricus).